The sequence spans 149 residues: Hut operon positive regulatory protein (149 aa).

It belongs to the HutP family. As to quaternary structure, homohexamer.

Functionally, antiterminator that binds to cis-acting regulatory sequences on the mRNA in the presence of histidine, thereby suppressing transcription termination and activating the hut operon for histidine utilization. This Geobacillus sp. (strain WCH70) protein is Hut operon positive regulatory protein.